Reading from the N-terminus, the 250-residue chain is Thermostable monoacylglycerol lipase (250 aa).

F29 contacts substrate. The active-site Nucleophile is S97. M98 contacts substrate. Active-site charge relay system residues include D196 and H226.

Belongs to the lipase/esterase LIP3/BchO family. Monomer.

The enzyme catalyses Hydrolyzes glycerol monoesters of long-chain fatty acids.. With respect to regulation, not inhibited by cholate, but slightly inhibited by triton X-100 and deoxycholate. Completely inhibited by PMSF (phenylmethylsulfonyl fluoride) at a concentration of 200 uM. Functionally, hydrolyzes monoacylglycerols, with the highest activity occurring with 1-monolauroylglycerol. This is Thermostable monoacylglycerol lipase from Bacillus sp. (strain H-257).